Reading from the N-terminus, the 201-residue chain is Recombination protein RecR (201 aa).

The C4-type zinc-finger motif lies at 60 to 75 (CSVCGNVDTSDPCTIC). The Toprim domain occupies 83-178 (ATLIVVEDVS…RVTKLAHGVP (96 aa)).

This sequence belongs to the RecR family.

May play a role in DNA repair. It seems to be involved in an RecBC-independent recombinational process of DNA repair. It may act with RecF and RecO. The polypeptide is Recombination protein RecR (Chelativorans sp. (strain BNC1)).